Reading from the N-terminus, the 460-residue chain is tRNA-2-methylthio-N(6)-dimethylallyladenosine synthase (460 aa).

The MTTase N-terminal domain occupies 10-126 (GSYWITTFGC…LEVLLNRVDS (117 aa)). Residues Cys-19, Cys-55, Cys-89, Cys-161, Cys-165, and Cys-168 each contribute to the [4Fe-4S] cluster site. The 238-residue stretch at 147–384 (RDSSICGWVN…NALVERCARE (238 aa)) folds into the Radical SAM core domain. Residues 387–455 (ARYAGRTEEV…SFSLSGTPLP (69 aa)) form the TRAM domain.

Belongs to the methylthiotransferase family. MiaB subfamily. In terms of assembly, monomer. [4Fe-4S] cluster serves as cofactor.

Its subcellular location is the cytoplasm. It catalyses the reaction N(6)-dimethylallyladenosine(37) in tRNA + (sulfur carrier)-SH + AH2 + 2 S-adenosyl-L-methionine = 2-methylsulfanyl-N(6)-dimethylallyladenosine(37) in tRNA + (sulfur carrier)-H + 5'-deoxyadenosine + L-methionine + A + S-adenosyl-L-homocysteine + 2 H(+). In terms of biological role, catalyzes the methylthiolation of N6-(dimethylallyl)adenosine (i(6)A), leading to the formation of 2-methylthio-N6-(dimethylallyl)adenosine (ms(2)i(6)A) at position 37 in tRNAs that read codons beginning with uridine. In Parasynechococcus marenigrum (strain WH8102), this protein is tRNA-2-methylthio-N(6)-dimethylallyladenosine synthase.